Consider the following 78-residue polypeptide: Calcium/calmodulin-dependent protein kinase II inhibitor 1 (78 aa).

The segment at 41 to 68 (NKRPPKLGQIGRSKRVVIEDDRIDDVLK) is CAMK2 inhibitory domain.

The protein belongs to the CAMK2N family. Interacts with CAMK2B; the presence of Ca(2+)/calmodulin increases the interaction but is not essential. Interacts with CAMK2A; this interaction requires CAMK2A activation by Ca(2+).

The protein resides in the synapse. It is found in the cell projection. It localises to the dendrite. Its subcellular location is the postsynaptic density. Its function is as follows. Potent and specific inhibitor of CaM-kinase II (CAMK2). Plays a role in the maintenance of long-term retrieval-induced memory in response to contextual fear. Modulates blood pressure and vascular reactivity via regulation of CAMK2 activity in addition to regulation of left ventricular mass. Mediates the NLRP3 inflammasome in cardiomyocytes via acting as an inhibitor of the MAPK14/p38 and MAPK8/JNK pathways, thereby regulating ventricular remodeling and cardiac rhythm post-myocardial infarction. Negatively effects insulin sensitivity and promotes lipid formation in adipose tissues independent of CAMK2 signaling. The chain is Calcium/calmodulin-dependent protein kinase II inhibitor 1 (CAMK2N1) from Homo sapiens (Human).